Here is a 104-residue protein sequence, read N- to C-terminus: Replication restart protein PriB (104 aa).

The region spanning 1–101 (MTNRLTLSGT…LHAEQIELID (101 aa)) is the SSB domain.

It belongs to the PriB family. As to quaternary structure, homodimer. Interacts with PriA and DnaT. Component of the replication restart primosome. Primosome assembly occurs via a 'hand-off' mechanism. PriA binds to replication forks, subsequently PriB then DnaT bind; DnaT then displaces ssDNA to generate the helicase loading substrate.

Involved in the restart of stalled replication forks, which reloads the replicative helicase on sites other than the origin of replication; the PriA-PriB pathway is the major replication restart pathway. During primosome assembly it facilitates complex formation between PriA and DnaT on DNA; stabilizes PriA on DNA. Stimulates the DNA unwinding activity of PriA helicase. This chain is Replication restart protein PriB, found in Salmonella typhi.